The following is a 100-amino-acid chain: MVPTTYYLALSGLLFALGMIGVLTRRTAIMVFLSVELMLNAANLSLVAFARAWGDLTGQTAVFIVMTLAAAEVAIGLAIIVAIFRKRETTNVDDLAGLKG.

Helical transmembrane passes span 2–22 (VPTTYYLALSGLLFALGMIGV), 29–49 (IMVFLSVELMLNAANLSLVAF), and 63–83 (FIVMTLAAAEVAIGLAIIVAI).

Belongs to the complex I subunit 4L family. As to quaternary structure, NDH-1 is composed of 15 different subunits. Subunits NuoA, H, J, K, L, M, N constitute the membrane sector of the complex.

The protein localises to the cell membrane. It carries out the reaction a quinone + NADH + 5 H(+)(in) = a quinol + NAD(+) + 4 H(+)(out). NDH-1 shuttles electrons from NADH, via FMN and iron-sulfur (Fe-S) centers, to quinones in the respiratory chain. The immediate electron acceptor for the enzyme in this species is believed to be a menaquinone. Couples the redox reaction to proton translocation (for every two electrons transferred, four hydrogen ions are translocated across the cytoplasmic membrane), and thus conserves the redox energy in a proton gradient. The protein is NADH-quinone oxidoreductase subunit K of Deinococcus deserti (strain DSM 17065 / CIP 109153 / LMG 22923 / VCD115).